Reading from the N-terminus, the 103-residue chain is V-type sodium ATPase subunit G (103 aa).

The protein belongs to the V-ATPase F subunit family.

Functionally, involved in ATP-driven sodium extrusion. The chain is V-type sodium ATPase subunit G (ntpG) from Enterococcus hirae (strain ATCC 9790 / DSM 20160 / JCM 8729 / LMG 6399 / NBRC 3181 / NCIMB 6459 / NCDO 1258 / NCTC 12367 / WDCM 00089 / R).